We begin with the raw amino-acid sequence, 29 residues long: Brevinin-2Ra (29 aa).

An intrachain disulfide couples C23 to C29.

Expressed by the skin glands.

It localises to the secreted. Antimicrobial peptide. The protein is Brevinin-2Ra of Pelophylax ridibundus (Marsh frog).